Here is an 873-residue protein sequence, read N- to C-terminus: Nitrate reductase [NADPH] (873 aa).

Positions 30 to 61 (TELDTADIPLPPPSKEPTEVLSLDKTTPDSHV) are disordered. Cys150 contacts Mo-molybdopterin. The 76-residue stretch at 512 to 587 (TRIIDLEEFK…MPDYHIGTLD (76 aa)) folds into the Cytochrome b5 heme-binding domain. Heme contacts are provided by His547 and His570. The FAD-binding FR-type domain occupies 616–729 (KAWTKATLTK…KGPTGRFEYL (114 aa)). FAD-binding positions include 672–675 (RSYT), 689–693 (LIKIY), 703–705 (KMT), and Thr756. Residue 843–852 (MVLVCGPEAM) coordinates NADP(+).

The protein belongs to the nitrate reductase family. Homodimer. The cofactor is FAD. It depends on heme as a cofactor. Requires Mo-molybdopterin as cofactor.

The enzyme catalyses nitrite + NADP(+) + H2O = nitrate + NADPH + H(+). In terms of biological role, nitrate reductase is a key enzyme involved in the first step of nitrate assimilation in plants, fungi and bacteria. This is Nitrate reductase [NADPH] (niaD) from Emericella nidulans (strain FGSC A4 / ATCC 38163 / CBS 112.46 / NRRL 194 / M139) (Aspergillus nidulans).